A 499-amino-acid chain; its full sequence is Apolipoprotein N-acyltransferase (499 aa).

The next 6 helical transmembrane spans lie at 17-37 (VLAGIGIAHGGLLWMAPALAL), 38-58 (LWSACRFPVAASLWGFVAVLL), 84-104 (ASIWLFCGAAAAVLVGLWAWL), 131-151 (IWGLAEVLLAGSPLFWIGVGG), 163-183 (LARWFGAGGLATLQLLIGWWL), and 198-218 (RSLLVGLLCLLLAHGFGWSLL). The region spanning 232–458 (WQPAIPTRSK…EGVGLADLHF (227 aa)) is the CN hydrolase domain. The active-site Proton acceptor is the Glu273. Residue Lys322 is part of the active site. Cys370 serves as the catalytic Nucleophile. The helical transmembrane segment at 474–494 (IGLMLFAVVGLGLSRVRSWLI) threads the bilayer.

This sequence belongs to the CN hydrolase family. Apolipoprotein N-acyltransferase subfamily.

It is found in the cell inner membrane. The catalysed reaction is N-terminal S-1,2-diacyl-sn-glyceryl-L-cysteinyl-[lipoprotein] + a glycerophospholipid = N-acyl-S-1,2-diacyl-sn-glyceryl-L-cysteinyl-[lipoprotein] + a 2-acyl-sn-glycero-3-phospholipid + H(+). Its pathway is protein modification; lipoprotein biosynthesis (N-acyl transfer). In terms of biological role, catalyzes the phospholipid dependent N-acylation of the N-terminal cysteine of apolipoprotein, the last step in lipoprotein maturation. This chain is Apolipoprotein N-acyltransferase, found in Prochlorococcus marinus (strain MIT 9313).